A 216-amino-acid polypeptide reads, in one-letter code: Adenylate kinase (216 aa).

An ATP-binding site is contributed by 11-16; it reads GSGKGT. The interval 31–60 is NMP; the sequence is ATGDLFRKAIERGDELGDTVKSYMERGELV. Residues T32, R37, 58-60, 86-89, and Q93 each bind AMP; these read ELV and GFPR. The tract at residues 127-163 is LID; the sequence is GRWVCRSCQSPYQCGCAEVAEGKCSRCQGELYQRPDD. Residue R128 participates in ATP binding. Positions 131, 134, 150, and 153 each coordinate Zn(2+). 2 residues coordinate AMP: R160 and R171. A199 contributes to the ATP binding site.

This sequence belongs to the adenylate kinase family. In terms of assembly, monomer.

It localises to the cytoplasm. The enzyme catalyses AMP + ATP = 2 ADP. The protein operates within purine metabolism; AMP biosynthesis via salvage pathway; AMP from ADP: step 1/1. In terms of biological role, catalyzes the reversible transfer of the terminal phosphate group between ATP and AMP. Plays an important role in cellular energy homeostasis and in adenine nucleotide metabolism. The polypeptide is Adenylate kinase (Dehalococcoides mccartyi (strain ATCC BAA-2266 / KCTC 15142 / 195) (Dehalococcoides ethenogenes (strain 195))).